A 198-amino-acid chain; its full sequence is Holliday junction branch migration complex subunit RuvA (198 aa).

Residues 1–63 form a domain I region; it reads MYDYIKGQLT…EDAHLLFGFH (63 aa). The tract at residues 64 to 142 is domain II; it reads TEDEKDVFLK…EAPQETGHTK (79 aa). A flexible linker region spans residues 143–147; sequence ARSNK. The domain III stretch occupies residues 148–198; that stretch reads AGNTQLDEAIEALLALGYTATELKKIRAFFEGTSETAEQYIKSALKLLMKG.

It belongs to the RuvA family. As to quaternary structure, homotetramer. Forms an RuvA(8)-RuvB(12)-Holliday junction (HJ) complex. HJ DNA is sandwiched between 2 RuvA tetramers; dsDNA enters through RuvA and exits via RuvB. An RuvB hexamer assembles on each DNA strand where it exits the tetramer. Each RuvB hexamer is contacted by two RuvA subunits (via domain III) on 2 adjacent RuvB subunits; this complex drives branch migration. In the full resolvosome a probable DNA-RuvA(4)-RuvB(12)-RuvC(2) complex forms which resolves the HJ.

Its subcellular location is the cytoplasm. Its function is as follows. The RuvA-RuvB-RuvC complex processes Holliday junction (HJ) DNA during genetic recombination and DNA repair, while the RuvA-RuvB complex plays an important role in the rescue of blocked DNA replication forks via replication fork reversal (RFR). RuvA specifically binds to HJ cruciform DNA, conferring on it an open structure. The RuvB hexamer acts as an ATP-dependent pump, pulling dsDNA into and through the RuvAB complex. HJ branch migration allows RuvC to scan DNA until it finds its consensus sequence, where it cleaves and resolves the cruciform DNA. The sequence is that of Holliday junction branch migration complex subunit RuvA from Streptococcus pyogenes serotype M49 (strain NZ131).